Here is a 446-residue protein sequence, read N- to C-terminus: MTGRGGAKKSRAAGPAPPTTTLVLDNGADTIKAGFVSDDKSDGKPRIIPNCLARDRHRKIYVGSELEKCKDFSELAFRRPVEKGFIVNWEAQKEIWDREFFDDKAAQKCDPSDTRLILTEQPNSLPSLQTHCDQIVFEEYGFASYYRGLGPVFNAYRDIQSIFRTPQSTIDSPAQVILLIDSGYSHTTVTPILQGRPLHPAIRRLDVGGKLMTNYLTRLLSVRHFDMRNEPYIVNEMKEAVCYTSLDFKGDLEKTWKGTRGEKREDYLSGAGIAKDYVLPDSHTRFHGVVRDYEPGVSARARKGIVSTEDVLTLRNERFVVPELLFNPSDIGIRQPGIADLVKQSLLAVPIGLWPGLLANIVVVGGNSLSEGFCQRLQTEILKRFPDECRVRVARPEDPIISTWLGAANFAKHEHASKLEVTKQEYEEHGAAWVARKFAAGLGLDP.

Residues 1 to 11 are compositionally biased toward basic residues; that stretch reads MTGRGGAKKSR. The tract at residues 1-24 is disordered; sequence MTGRGGAKKSRAAGPAPPTTTLVL.

It belongs to the actin family. ARP6 subfamily. As to quaternary structure, component of the SWR1 chromatin remodeling complex.

It is found in the cytoplasm. Its subcellular location is the cytoskeleton. The protein localises to the nucleus. Functionally, component of the SWR1 complex which mediates the ATP-dependent exchange of histone H2A for the H2A variant H2A.Z leading to transcriptional regulation of selected genes by chromatin remodeling. Involved in chromosome stability. This Neurospora crassa (strain ATCC 24698 / 74-OR23-1A / CBS 708.71 / DSM 1257 / FGSC 987) protein is Actin-related protein 6 (arp-6).